The sequence spans 507 residues: Chromosomal replication initiator protein DnaA (507 aa).

Residues 1 to 112 (MTDDPGSGFT…PATDEADDTT (112 aa)) are domain I, interacts with DnaA modulators. The disordered stretch occupies residues 99–155 (RIAPPATDEADDTTVPPSENPATTSPDTTTDNDEIDDSAAARGDNQHSWPSYFTERP). Residues 113 to 127 (VPPSENPATTSPDTT) are compositionally biased toward polar residues. The tract at residues 113–166 (VPPSENPATTSPDTTTDNDEIDDSAAARGDNQHSWPSYFTERPHNTDSATAGVT) is domain II. A domain III, AAA+ region region spans residues 167-383 (SLNRRYTFDT…GALIRVTAFA (217 aa)). 4 residues coordinate ATP: G211, G213, K214, and T215. The domain IV, binds dsDNA stretch occupies residues 384–507 (SLNKTPIDKA…TTRIRQRSKR (124 aa)).

The protein belongs to the DnaA family. In terms of assembly, oligomerizes as a right-handed, spiral filament on DNA at oriC.

Its subcellular location is the cytoplasm. Its function is as follows. Plays an essential role in the initiation and regulation of chromosomal replication. ATP-DnaA binds to the origin of replication (oriC) to initiate formation of the DNA replication initiation complex once per cell cycle. Binds the DnaA box (a 9 base pair repeat at the origin) and separates the double-stranded (ds)DNA. Forms a right-handed helical filament on oriC DNA; dsDNA binds to the exterior of the filament while single-stranded (ss)DNA is stabiized in the filament's interior. The ATP-DnaA-oriC complex binds and stabilizes one strand of the AT-rich DNA unwinding element (DUE), permitting loading of DNA polymerase. After initiation quickly degrades to an ADP-DnaA complex that is not apt for DNA replication. Binds acidic phospholipids. In Mycobacterium tuberculosis (strain ATCC 25177 / H37Ra), this protein is Chromosomal replication initiator protein DnaA.